A 350-amino-acid chain; its full sequence is Heat-inducible transcription repressor HrcA (350 aa).

Belongs to the HrcA family.

In terms of biological role, negative regulator of class I heat shock genes (grpE-dnaK-dnaJ and groELS operons). Prevents heat-shock induction of these operons. In Methylococcus capsulatus (strain ATCC 33009 / NCIMB 11132 / Bath), this protein is Heat-inducible transcription repressor HrcA.